Here is a 273-residue protein sequence, read N- to C-terminus: Putative esterase/lipase 3 (273 aa).

H34 is an active-site residue. S100 acts as the Charge relay system in catalysis.

It belongs to the lipase/esterase LIP3/BchO family.

The polypeptide is Putative esterase/lipase 3 (Mycoplasma genitalium (strain ATCC 33530 / DSM 19775 / NCTC 10195 / G37) (Mycoplasmoides genitalium)).